A 359-amino-acid chain; its full sequence is MIDTVYGFGQGLMGGIWPATVWPVLWALIKIVCVLLPLMGCVAYLTLWERKAIGFTQIRFGPNRVGPFGLLQPIADALKLLTKEIIMPTAASKGLFVLGPIMTIMPALAAWAVIPFGPDIALSNINAGLLFLMAITSMEVYGVIIAGWASNSKYAFLGAMRASAQMVSYEIAMGFCLVVVLMVSASLNMTDIVMSQAKGIAVGYGLNFLSWNWLPLLPIFVVYFISGLAETNRHPFDVVEGESEIVAGHMVEYSGMAFAMFFLAEYANMWLVAILAVILFLGGWLSPVDWWLFNLIPGWIWLGAKTFVVVTMFLWVRATFPRFRYDQIMRLGWKIFIPVTLVWLVVVGAWMQTPYNIWK.

8 helical membrane passes run I16–L36, G94–I114, L129–A149, V167–L187, F208–L228, F261–L281, I296–V316, and L331–M351.

The protein belongs to the complex I subunit 1 family. NDH-1 is composed of 14 different subunits. Subunits NuoA, H, J, K, L, M, N constitute the membrane sector of the complex.

The protein localises to the cell inner membrane. It catalyses the reaction a quinone + NADH + 5 H(+)(in) = a quinol + NAD(+) + 4 H(+)(out). NDH-1 shuttles electrons from NADH, via FMN and iron-sulfur (Fe-S) centers, to quinones in the respiratory chain. The immediate electron acceptor for the enzyme in this species is believed to be ubiquinone. Couples the redox reaction to proton translocation (for every two electrons transferred, four hydrogen ions are translocated across the cytoplasmic membrane), and thus conserves the redox energy in a proton gradient. This subunit may bind ubiquinone. This chain is NADH-quinone oxidoreductase subunit H, found in Polaromonas sp. (strain JS666 / ATCC BAA-500).